Reading from the N-terminus, the 119-residue chain is Protein Wnt-4 (119 aa).

A lipid anchor (O-palmitoleoyl serine; by PORCN) is attached at Ser1. 2 disulfides stabilise this stretch: Cys69-Cys100 and Cys85-Cys95. Asn86 carries N-linked (GlcNAc...) asparagine glycosylation.

The protein belongs to the Wnt family. In terms of processing, palmitoleoylation is required for efficient binding to frizzled receptors. Depalmitoleoylation leads to Wnt signaling pathway inhibition.

It localises to the secreted. Its subcellular location is the extracellular space. The protein localises to the extracellular matrix. Ligand for members of the frizzled family of seven transmembrane receptors. Plays an important role in embryonic development. This Sceloporus occidentalis (Western fence lizard) protein is Protein Wnt-4 (WNT-4).